We begin with the raw amino-acid sequence, 161 residues long: 18.3 kDa class I heat shock protein (161 aa).

The region spanning 48 to 161 is the sHSP domain; it reads ETAAFANARI…KPQVKAINVY (114 aa).

It belongs to the small heat shock protein (HSP20) family. Forms oligomeric structures.

The protein localises to the cytoplasm. The chain is 18.3 kDa class I heat shock protein (HSP18) from Oxybasis rubra (Red goosefoot).